A 152-amino-acid polypeptide reads, in one-letter code: Nucleoside diphosphate kinase A (152 aa).

Residues Lys12, Phe60, Arg88, and Thr94 each coordinate ATP. Lys100 participates in a covalent cross-link: Glycyl lysine isopeptide (Lys-Gly) (interchain with G-Cter in ubiquitin). Arg105 and Asn115 together coordinate ATP. Residue His118 is the Pros-phosphohistidine intermediate of the active site. 3 positions are modified to phosphoserine: Ser120, Ser122, and Ser125.

The protein belongs to the NDK family. In terms of assembly, hexamer of two different chains: An and B (A6, A5B, A4B2, A3B3, A2B4, AB5, B6). Interacts with PRUNE1. Component of the SET complex, composed of at least ANP32A, APEX1, HMGB2, NME1, SET and TREX1. Within this complex, interacts directly with SET. Also interacts with TREX1, but only following translocation to the nucleus. Mg(2+) is required as a cofactor.

It localises to the cytoplasm. It is found in the nucleus. The enzyme catalyses a 2'-deoxyribonucleoside 5'-diphosphate + ATP = a 2'-deoxyribonucleoside 5'-triphosphate + ADP. It catalyses the reaction a ribonucleoside 5'-diphosphate + ATP = a ribonucleoside 5'-triphosphate + ADP. Its activity is regulated as follows. Autophosphorylation at His-118 increases serine/threonine protein kinase activity of the enzyme. Interaction with the SET complex inhibits exonuclease activity. Its function is as follows. Major role in the synthesis of nucleoside triphosphates other than ATP. The ATP gamma phosphate is transferred to the NDP beta phosphate via a ping-pong mechanism, using a phosphorylated active-site intermediate. Possesses nucleoside-diphosphate kinase, serine/threonine-specific protein kinase, geranyl and farnesyl pyrophosphate kinase, histidine protein kinase and 3'-5' exonuclease activities. Involved in cell proliferation, differentiation and development, signal transduction, G protein-coupled receptor endocytosis, and gene expression. Required for neural development including neural patterning and cell fate determination. During GZMA-mediated cell death, works in concert with TREX1. NME1 nicks one strand of DNA and TREX1 removes bases from the free 3' end to enhance DNA damage and prevent DNA end reannealing and rapid repair. This Canis lupus familiaris (Dog) protein is Nucleoside diphosphate kinase A (NME1).